A 440-amino-acid polypeptide reads, in one-letter code: MALLVLGLVSCTFFLAVNGLYSSSDDVIELTPSNFNREVIQSDSLWLVEFYAPWCGHCQRLTPEWKKAATALKDVVKVGAVDADKHHSLGGQYGVQGFPTIKIFGSNKNRPEDYQGGRTGEAIVDAALSALRQLVKDRLGGRSGGYSSGKQGRSDSSSKKDVIELTDDSFDKNVLDSEDVWMVEFYAPWCGHCKNLEPEWAAAASEVKEQTKGKVKLAAVDATVNQVLASRYGIRGFPTIKIFQKGESPVDYDGGRTRSDIVSRALDLFSDNAPPPELLEIINEDIAKRTCEEHQLCVVAVLPHILDTGAAGRNSYLEVLLKLADKYKKKMWGWLWTEAGAQSELETALGIGGFGYPAMAAINARKMKFALLKGSFSEQGINEFLRELSFGRGSTAPVGGGAFPTIVEREPWDGRDGELPVEDDIDLSDVELDDLGKDEL.

The N-terminal stretch at 1 to 19 (MALLVLGLVSCTFFLAVNG) is a signal peptide. Thioredoxin domains are found at residues 20 to 133 (LYSS…ALRQ) and 154 to 287 (SDSS…EDIA). Catalysis depends on nucleophile residues Cys-55 and Cys-58. Cys-55 and Cys-58 form a disulfide bridge. Position 129 is a phosphoserine (Ser-129). Residues 141–161 (GRSGGYSSGKQGRSDSSSKKD) are disordered. Basic and acidic residues predominate over residues 152–161 (GRSDSSSKKD). Position 156 is a phosphoserine; by FAM20C (Ser-156). Phosphoserine is present on Ser-158. Residues Cys-190 and Cys-193 each act as nucleophile in the active site. A disulfide bond links Cys-190 and Cys-193. Ser-428 is subject to Phosphoserine. The Prevents secretion from ER motif lies at 437–440 (KDEL).

The protein belongs to the protein disulfide isomerase family. As to quaternary structure, part of a large chaperone multiprotein complex comprising DNAJB11, HSP90B1, HSPA5, HYOU, PDIA2, PDIA4, PDIA6, PPIB, SDF2L1, UGGT1 and very small amounts of ERP29, but not, or at very low levels, CALR nor CANX. Interacts with MICA on the surface of tumor cells, leading to MICA disulfide bond reduction which is required for its release from tumor cells. Interacts with ITGB3 following platelet stimulation. Interacts with ERN1; the interaction is direct. Interacts with EIF2AK3. As to expression, expressed in platelets (at protein level).

The protein localises to the endoplasmic reticulum lumen. Its subcellular location is the cell membrane. The protein resides in the melanosome. It catalyses the reaction Catalyzes the rearrangement of -S-S- bonds in proteins.. Its function is as follows. May function as a chaperone that inhibits aggregation of misfolded proteins. Negatively regulates the unfolded protein response (UPR) through binding to UPR sensors such as ERN1, which in turn inactivates ERN1 signaling. May also regulate the UPR via the EIF2AK3 UPR sensor. Plays a role in platelet aggregation and activation by agonists such as convulxin, collagen and thrombin. This Homo sapiens (Human) protein is Protein disulfide-isomerase A6 (PDIA6).